Reading from the N-terminus, the 216-residue chain is Glycerol-3-phosphate acyltransferase (216 aa).

A run of 5 helical transmembrane segments spans residues 5-25 (LIAL…FGLV), 70-90 (IAAA…AGAF), 118-138 (VVFW…AAIF), 140-160 (ISSL…LAWG), and 164-184 (VAIM…ANIS). Residues 192-201 (PRIGGKKSET) are compositionally biased toward basic and acidic residues. The tract at residues 192 to 216 (PRIGGKKSETSADVSDGDDPDTPAT) is disordered. Acidic residues predominate over residues 206 to 216 (SDGDDPDTPAT).

This sequence belongs to the PlsY family. As to quaternary structure, probably interacts with PlsX.

The protein localises to the cell inner membrane. The catalysed reaction is an acyl phosphate + sn-glycerol 3-phosphate = a 1-acyl-sn-glycero-3-phosphate + phosphate. It participates in lipid metabolism; phospholipid metabolism. Catalyzes the transfer of an acyl group from acyl-phosphate (acyl-PO(4)) to glycerol-3-phosphate (G3P) to form lysophosphatidic acid (LPA). This enzyme utilizes acyl-phosphate as fatty acyl donor, but not acyl-CoA or acyl-ACP. This is Glycerol-3-phosphate acyltransferase from Maricaulis maris (strain MCS10) (Caulobacter maris).